A 207-amino-acid chain; its full sequence is Protein YABBY 6 (207 aa).

The C4-type zinc-finger motif lies at 16–43 (CNFCNTILAVSVPGNSMLNIVTVRCGHC).

This sequence belongs to the YABBY family. As to expression, expressed in leaf blades, leaf sheaths and flowers.

The protein resides in the nucleus. The sequence is that of Protein YABBY 6 (YAB6) from Oryza sativa subsp. japonica (Rice).